Consider the following 349-residue polypeptide: Hydroxymethylglutaryl-CoA synthase (349 aa).

2 residues coordinate (3S)-3-hydroxy-3-methylglutaryl-CoA: Asp30 and Ala31. Glu82 serves as the catalytic Proton donor/acceptor. (3S)-3-hydroxy-3-methylglutaryl-CoA is bound by residues Cys114 and Thr155. Residue Cys114 is the Acyl-thioester intermediate of the active site. Arg203 provides a ligand contact to CoA. (3S)-3-hydroxy-3-methylglutaryl-CoA contacts are provided by Thr205 and His238. The active-site Proton donor/acceptor is the His238. Lys243 contributes to the CoA binding site. (3S)-3-hydroxy-3-methylglutaryl-CoA is bound by residues Asn270 and Ser300.

Belongs to the thiolase-like superfamily. Archaeal HMG-CoA synthase family. Interacts with acetoacetyl-CoA thiolase that catalyzes the precedent step in the pathway and with a DUF35 protein. The acetoacetyl-CoA thiolase/HMG-CoA synthase complex channels the intermediate via a fused CoA-binding site, which allows for efficient coupling of the endergonic thiolase reaction with the exergonic HMGCS reaction.

The catalysed reaction is acetoacetyl-CoA + acetyl-CoA + H2O = (3S)-3-hydroxy-3-methylglutaryl-CoA + CoA + H(+). It functions in the pathway metabolic intermediate biosynthesis; (R)-mevalonate biosynthesis; (R)-mevalonate from acetyl-CoA: step 2/3. Functionally, catalyzes the condensation of acetyl-CoA with acetoacetyl-CoA to form 3-hydroxy-3-methylglutaryl-CoA (HMG-CoA). Functions in the mevalonate (MVA) pathway leading to isopentenyl diphosphate (IPP), a key precursor for the biosynthesis of isoprenoid compounds that are building blocks of archaeal membrane lipids. This Methanococcus maripaludis (strain C6 / ATCC BAA-1332) protein is Hydroxymethylglutaryl-CoA synthase.